The following is a 431-amino-acid chain: Enolase (431 aa).

Gln-167 provides a ligand contact to (2R)-2-phosphoglycerate. Glu-209 (proton donor) is an active-site residue. Mg(2+)-binding residues include Asp-246, Glu-290, and Asp-317. 4 residues coordinate (2R)-2-phosphoglycerate: Lys-342, Arg-371, Ser-372, and Lys-393. Residue Lys-342 is the Proton acceptor of the active site.

The protein belongs to the enolase family. In terms of assembly, component of the RNA degradosome, a multiprotein complex involved in RNA processing and mRNA degradation. The cofactor is Mg(2+).

Its subcellular location is the cytoplasm. The protein localises to the secreted. It localises to the cell surface. The enzyme catalyses (2R)-2-phosphoglycerate = phosphoenolpyruvate + H2O. It functions in the pathway carbohydrate degradation; glycolysis; pyruvate from D-glyceraldehyde 3-phosphate: step 4/5. Its function is as follows. Catalyzes the reversible conversion of 2-phosphoglycerate (2-PG) into phosphoenolpyruvate (PEP). It is essential for the degradation of carbohydrates via glycolysis. This chain is Enolase, found in Pectobacterium atrosepticum (strain SCRI 1043 / ATCC BAA-672) (Erwinia carotovora subsp. atroseptica).